The following is a 76-amino-acid chain: Exodeoxyribonuclease 7 small subunit (76 aa).

The protein belongs to the XseB family. Heterooligomer composed of large and small subunits.

The protein localises to the cytoplasm. The enzyme catalyses Exonucleolytic cleavage in either 5'- to 3'- or 3'- to 5'-direction to yield nucleoside 5'-phosphates.. Functionally, bidirectionally degrades single-stranded DNA into large acid-insoluble oligonucleotides, which are then degraded further into small acid-soluble oligonucleotides. This Geobacillus thermodenitrificans (strain NG80-2) protein is Exodeoxyribonuclease 7 small subunit.